The primary structure comprises 318 residues: Deoxyribose-phosphate aldolase (318 aa).

Residue D155 is the Proton donor/acceptor of the active site. The active-site Schiff-base intermediate with acetaldehyde is the K218. K254 functions as the Proton donor/acceptor in the catalytic mechanism.

The protein belongs to the DeoC/FbaB aldolase family. DeoC type 2 subfamily. Interacts with YBX1.

It is found in the cytoplasm. The protein localises to the cytoplasmic granule. The protein resides in the nucleus. The enzyme catalyses 2-deoxy-D-ribose 5-phosphate = D-glyceraldehyde 3-phosphate + acetaldehyde. The protein operates within carbohydrate degradation; 2-deoxy-D-ribose 1-phosphate degradation; D-glyceraldehyde 3-phosphate and acetaldehyde from 2-deoxy-alpha-D-ribose 1-phosphate: step 2/2. In terms of biological role, catalyzes a reversible aldol reaction between acetaldehyde and D-glyceraldehyde 3-phosphate to generate 2-deoxy-D-ribose 5-phosphate. Participates in stress granule (SG) assembly. May allow ATP production from extracellular deoxyinosine in conditions of energy deprivation. The chain is Deoxyribose-phosphate aldolase (Dera) from Mus musculus (Mouse).